Here is a 155-residue protein sequence, read N- to C-terminus: RING finger protein 122 (155 aa).

The chain crosses the membrane as a helical span at residues 40-60 (VIFGTGIFVFMLSLIFCCYFI). The RING-type; atypical zinc finger occupies 93–134 (CAVCLEDFKGKDELGVLPCQHAFHRKCLVKWLEVRCVCPMCN).

As to expression, widely expressed in several tissues and cell lines.

Its subcellular location is the golgi apparatus. It localises to the endoplasmic reticulum. It is found in the membrane. Its function is as follows. May induce necrosis and apoptosis. May play a role in cell viability. In Homo sapiens (Human), this protein is RING finger protein 122 (RNF122).